A 543-amino-acid chain; its full sequence is MAKSILFGEESRRAMQAGVDKLANAVKVTLGPKGRNVVLDKKFGAPLITNDGVTIAKEIELEDMYENMGAQLVKEVATKTNDVAGDGTTTATLLAQAIIREGLKNVTAGANPMLIRKGIKLAVDTAVEQIKKSSKQVDGKEDIARVAAISAADPEIGKLIADAMEKVGNEGVITVEESNTMATELEVVEGMQFDRGYLSPYMVTDAEKMEAVLENPYILLTDKKISNIQEILPILEQIVQQGKKLLIIAEDIEGEALATLVVNKLRGTFTCVAVKAPGFGDRRKEMLRDIAILTGGEVISEEVGRELKDVTLDMLGTAESVKISKENTTIVNGKGNKEVIADRVGQIRRQIEETSSEFDKEKLQERLAKLAGGVAVVKVGAATETELKERKLRIEDALAATKAAVEEGIVAGGGTAYLRAIKEVEKLTDDNAEVRLGIAIIRRALEEPVRQIAANAGLEGSVIIDKIKNSEDGIGFDALEGEYTNMMQKGIVDPAKVTRSALQNAASVASTFLTTECVVAEIPEKNPMPAAPGMGGMGMDGMY.

ATP contacts are provided by residues 29–32 (TLGP), 86–90 (DGTTT), Gly-413, 477–479 (DAL), and Asp-493.

The protein belongs to the chaperonin (HSP60) family. In terms of assembly, forms a cylinder of 14 subunits composed of two heptameric rings stacked back-to-back. Interacts with the co-chaperonin GroES.

Its subcellular location is the cytoplasm. It carries out the reaction ATP + H2O + a folded polypeptide = ADP + phosphate + an unfolded polypeptide.. Functionally, together with its co-chaperonin GroES, plays an essential role in assisting protein folding. The GroEL-GroES system forms a nano-cage that allows encapsulation of the non-native substrate proteins and provides a physical environment optimized to promote and accelerate protein folding. The chain is Chaperonin GroEL from Clostridium novyi (strain NT).